We begin with the raw amino-acid sequence, 446 residues long: Putative zinc metalloprotease NMA0084 (446 aa).

Position 18 (His18) interacts with Zn(2+). Glu19 is a catalytic residue. His22 contributes to the Zn(2+) binding site. The next 3 helical transmembrane spans lie at 93–115 (IAIV…GLSF), 376–398 (FLAL…LDGG), and 419–438 (NIGL…VAFF). The 82-residue stretch at 100-181 (PLTNLALAVL…KVAVGVQTAS (82 aa)) folds into the PDZ domain.

Belongs to the peptidase M50B family. The cofactor is Zn(2+).

It is found in the cell inner membrane. This chain is Putative zinc metalloprotease NMA0084, found in Neisseria meningitidis serogroup A / serotype 4A (strain DSM 15465 / Z2491).